We begin with the raw amino-acid sequence, 175 residues long: Nucleoside triphosphate/diphosphate phosphatase (175 aa).

Arg23 acts as the Proton donor in catalysis. 6 residues coordinate Mg(2+): Asn87, Asp103, Asp105, Asp107, Asp120, and Glu123.

It belongs to the Ntdp family. Mg(2+) serves as cofactor.

It carries out the reaction a ribonucleoside 5'-triphosphate + H2O = a ribonucleoside 5'-diphosphate + phosphate + H(+). The enzyme catalyses a ribonucleoside 5'-diphosphate + H2O = a ribonucleoside 5'-phosphate + phosphate + H(+). In terms of biological role, has nucleoside phosphatase activity towards nucleoside triphosphates and nucleoside diphosphates. The chain is Nucleoside triphosphate/diphosphate phosphatase from Oceanobacillus iheyensis (strain DSM 14371 / CIP 107618 / JCM 11309 / KCTC 3954 / HTE831).